We begin with the raw amino-acid sequence, 125 residues long: Prepro-urotensin II-alpha (125 aa).

Positions 1 to 21 (MMCNLLLSFSVLLLSCTHLVA) are cleaved as a signal peptide. A propeptide spanning residues 109-111 (QFR) is cleaved from the precursor. The cysteines at positions 119 and 124 are disulfide-linked.

The protein belongs to the urotensin-2 family.

It is found in the secreted. Its function is as follows. Urotensin is found in the teleost caudal neurosecretory system. It has a suggested role in osmoregulation and as a corticotropin-releasing factor. The non-hormonal portion of this precursor may be a urotensin binding protein, urophysin. This chain is Prepro-urotensin II-alpha, found in Cyprinus carpio (Common carp).